A 950-amino-acid polypeptide reads, in one-letter code: MIGALARKLFGSANDRRVKGYQARVNAINALEPELAKLTDEQLKARTAEFKAQLAEGKTLDDILVPAFATVREASKRTLGQRHFDVQLIGGMVLHEGDIAEMKTGEGKTLVATLAVYLNALAGKGVHVVTVNDYLARRDAGWMSQIYGFLGLTTGVIVHGLDDAERKLAYACDITYGTNNEYGFDYLRDNMKYRLEDMVQRGHYFAIVDEVDSILIDEARTPLIISGPLDDRSDFYNTIDTFVPKLDKSDYDVDEKQRTVTLTEAGMEKIETLLRDAGQLKGESLYDVENVSVVHHINQALRAHTLFTRDKDYIVRDGEVVIIDEFTGRMMPGRRYSEGLHQALEAKEHVQVQPENQTLASITFQNYFRMYEKLAGMTGTAATEADELFDIYKLEVVEIPTNLPVARLDEDDEVYRTQQEKYAAILAEIERANSRLQPVLVGTASIEKSEVLAAYLKQHGYKQIDFGSERALDKLYAAARAGKPAKLFAVLNARFHEQEAYIVAEAGVPGAITIATNMAGRGTDIKLGGSLEMRIQQETAGITDETEKAAKIEQIKADIARFREIVLKAEETVEIEPAKGSKPAKTVVKPGGLYIIGSERHESRRIDNQLRGRSGRQGDPGRSKFFLSLEDDLMRIFGSDRLDSMLTRLGLKEGEAIIHPWINKALEKAQQKVEARNFDIRKNLLKFDNVQNDQRKVIFDQRVELMQDESVAETIADMRHAFIDDLVSKHVPEHAYAEQWDVAGLKEELKRVLDIELPVDEWAKEEGIADEELLKRIETHADERMAAKVGQWGPDVMRYVEKTILLQTLDHLWREHLVMLDHLRQVIGLRGYGQRDPLQEYKSEAFTLFEAMIAHLREAVTAQLMRVEIVPPEEQQPVLPPMQAHHANPTTGEDEMAFANVSLVPSSGAAPVPAEARNPNDPSTWGKVGRNEDCPCGSGKKYKHCHGRYA.

Residues Gln87, 105–109 (GEGKT), and Asp524 contribute to the ATP site. The interval 908–932 (GAAPVPAEARNPNDPSTWGKVGRNE) is disordered. Positions 934, 936, 945, and 946 each coordinate Zn(2+).

This sequence belongs to the SecA family. As to quaternary structure, monomer and homodimer. Part of the essential Sec protein translocation apparatus which comprises SecA, SecYEG and auxiliary proteins SecDF-YajC and YidC. Zn(2+) serves as cofactor.

The protein resides in the cell inner membrane. It localises to the cytoplasm. The catalysed reaction is ATP + H2O + cellular proteinSide 1 = ADP + phosphate + cellular proteinSide 2.. Functionally, part of the Sec protein translocase complex. Interacts with the SecYEG preprotein conducting channel. Has a central role in coupling the hydrolysis of ATP to the transfer of proteins into and across the cell membrane, serving both as a receptor for the preprotein-SecB complex and as an ATP-driven molecular motor driving the stepwise translocation of polypeptide chains across the membrane. The polypeptide is Protein translocase subunit SecA (Bradyrhizobium sp. (strain BTAi1 / ATCC BAA-1182)).